Consider the following 611-residue polypeptide: UvrABC system protein C (611 aa).

Residues 14-91 (TSPGCYIHKD…IKENQPKYNI (78 aa)) enclose the GIY-YIG domain. One can recognise a UVR domain in the interval 196 to 231 (DQIIEDLRGKMAGAAQAMEFEKAAEYRDLIQSIGTL). A disordered region spans residues 587–611 (KLNPKTQEQEQAQLREVAEPQIGLE).

Belongs to the UvrC family. As to quaternary structure, interacts with UvrB in an incision complex.

It is found in the cytoplasm. In terms of biological role, the UvrABC repair system catalyzes the recognition and processing of DNA lesions. UvrC both incises the 5' and 3' sides of the lesion. The N-terminal half is responsible for the 3' incision and the C-terminal half is responsible for the 5' incision. The sequence is that of UvrABC system protein C from Streptococcus sanguinis (strain SK36).